Reading from the N-terminus, the 207-residue chain is dITP/XTP pyrophosphatase (207 aa).

Position 7-12 (7-12) interacts with substrate; sequence SNNAKK. Asp72 (proton acceptor) is an active-site residue. Asp72 provides a ligand contact to Mg(2+). Residues Ser73, 155-158, Lys183, and 188-189 each bind substrate; these read FGYD and HR.

Belongs to the HAM1 NTPase family. In terms of assembly, homodimer. Requires Mg(2+) as cofactor.

The catalysed reaction is XTP + H2O = XMP + diphosphate + H(+). It catalyses the reaction dITP + H2O = dIMP + diphosphate + H(+). It carries out the reaction ITP + H2O = IMP + diphosphate + H(+). Functionally, pyrophosphatase that catalyzes the hydrolysis of nucleoside triphosphates to their monophosphate derivatives, with a high preference for the non-canonical purine nucleotides XTP (xanthosine triphosphate), dITP (deoxyinosine triphosphate) and ITP. Seems to function as a house-cleaning enzyme that removes non-canonical purine nucleotides from the nucleotide pool, thus preventing their incorporation into DNA/RNA and avoiding chromosomal lesions. In Corynebacterium diphtheriae (strain ATCC 700971 / NCTC 13129 / Biotype gravis), this protein is dITP/XTP pyrophosphatase.